A 286-amino-acid polypeptide reads, in one-letter code: Polyamine aminopropyltransferase (286 aa).

The PABS domain maps to 5-242 (DNWFTEVLEE…GWWSATLASK (238 aa)). Glutamine 35 lines the S-methyl-5'-thioadenosine pocket. Residues histidine 66 and aspartate 90 each coordinate spermidine. S-methyl-5'-thioadenosine-binding positions include aspartate 110 and 141 to 142 (DG). The Proton acceptor role is filled by aspartate 160. 160–163 (DSTD) lines the spermidine pocket.

This sequence belongs to the spermidine/spermine synthase family. In terms of assembly, homodimer or homotetramer.

The protein resides in the cytoplasm. It catalyses the reaction S-adenosyl 3-(methylsulfanyl)propylamine + putrescine = S-methyl-5'-thioadenosine + spermidine + H(+). It functions in the pathway amine and polyamine biosynthesis; spermidine biosynthesis; spermidine from putrescine: step 1/1. Functionally, catalyzes the irreversible transfer of a propylamine group from the amino donor S-adenosylmethioninamine (decarboxy-AdoMet) to putrescine (1,4-diaminobutane) to yield spermidine. This chain is Polyamine aminopropyltransferase, found in Alkalilimnicola ehrlichii (strain ATCC BAA-1101 / DSM 17681 / MLHE-1).